The primary structure comprises 215 residues: Protein FAM27D1 (215 aa).

The tract at residues 74-172 (QPKTHTHTGM…RGTQADLSSR (99 aa)) is disordered. Positions 87-108 (THRERERNTQRLRDRERRENGR) are enriched in basic and acidic residues. Basic residues predominate over residues 109 to 122 (HTHRHTHTLTHTHT). Basic and acidic residues-rich tracts occupy residues 123–139 (HRDT…ETHT) and 149–162 (SAHD…REQP). The span at 163–172 (RGTQADLSSR) shows a compositional bias: polar residues.

Belongs to the FAM27 family.

The chain is Protein FAM27D1 (FAM27D1) from Homo sapiens (Human).